Consider the following 236-residue polypeptide: Proliferating cell nuclear antigen (236 aa).

Residues 31–50 (RCDRNISMGMNLNNMAKMLK) mediate DNA binding.

The protein belongs to the PCNA family.

It is found in the nucleus. Functionally, this protein is an auxiliary protein of DNA polymerase delta and is involved in the control of eukaryotic DNA replication by increasing the polymerase's processibility during elongation of the leading strand. The polypeptide is Proliferating cell nuclear antigen (Glycine max (Soybean)).